The sequence spans 262 residues: Nurim (262 aa).

Over 1 to 4 (MAPA) the chain is Nuclear. Residues 5–28 (LLLIPAALASFILAFGTGVEFVRF) form a helical membrane-spanning segment. Topologically, residues 29–58 (TSLRPLLGRISESGSPDARQGWLAALQDQS) are perinuclear space. A helical membrane pass occupies residues 59-80 (ILVPLVWDLGLLLLFVGQHSLM). Over 81–97 (ATETVKEWMSRYFGVLQ) the chain is Nuclear. Residues 98 to 114 (RSLYVACTALALQLVMR) form a helical membrane-spanning segment. The Perinuclear space segment spans residues 115 to 133 (YWEPVPRGPVLWETRTEPW). The helical transmembrane segment at 134 to 164 (ATWVPLLCFVLHVISWLLIFSILLVFDYAEL) threads the bilayer. Residues 165–191 (MGLKQVYYHVLGLGEPLALKSPRALRL) are Nuclear-facing. Residues 192 to 210 (FSHLRHPVCVELLTVLWVV) traverse the membrane as a helical segment. Residues 211 to 216 (PTLGTD) are Perinuclear space-facing. A helical membrane pass occupies residues 217 to 234 (RLLLALLLTLYLGLAHGL). The Nuclear segment spans residues 235–262 (DQHDLRYLRAQLQRKLHLLSRPQDGEAE).

It belongs to the nurim family.

It is found in the nucleus inner membrane. This is Nurim (NRM) from Bos taurus (Bovine).